A 140-amino-acid chain; its full sequence is Large ribosomal subunit protein uL16 (140 aa).

Belongs to the universal ribosomal protein uL16 family. As to quaternary structure, part of the 50S ribosomal subunit.

Functionally, binds 23S rRNA and is also seen to make contacts with the A and possibly P site tRNAs. The polypeptide is Large ribosomal subunit protein uL16 (Phytoplasma mali (strain AT)).